The chain runs to 356 residues: Biotin synthase (356 aa).

The disordered stretch occupies residues 1-28; that stretch reads MTIQANVPTGDETSDEASRQTSNEASSE. Residues 77 to 302 enclose the Radical SAM core domain; sequence EDVEVEGIIS…RTVLRYAGGR (226 aa). Positions 92, 96, and 99 each coordinate [4Fe-4S] cluster. [2Fe-2S] cluster contacts are provided by C135, C168, C227, and R297.

This sequence belongs to the radical SAM superfamily. Biotin synthase family. As to quaternary structure, homodimer. [4Fe-4S] cluster is required as a cofactor. It depends on [2Fe-2S] cluster as a cofactor.

The catalysed reaction is (4R,5S)-dethiobiotin + (sulfur carrier)-SH + 2 reduced [2Fe-2S]-[ferredoxin] + 2 S-adenosyl-L-methionine = (sulfur carrier)-H + biotin + 2 5'-deoxyadenosine + 2 L-methionine + 2 oxidized [2Fe-2S]-[ferredoxin]. It functions in the pathway cofactor biosynthesis; biotin biosynthesis; biotin from 7,8-diaminononanoate: step 2/2. In terms of biological role, catalyzes the conversion of dethiobiotin (DTB) to biotin by the insertion of a sulfur atom into dethiobiotin via a radical-based mechanism. This is Biotin synthase from Arthrobacter sp. (strain FB24).